Here is a 244-residue protein sequence, read N- to C-terminus: Transforming protein v-Fos/v-Fox (244 aa).

Residues 1-236 are transforming protein v-Fos; that stretch reads DSLSYYHSPA…LFPASSGHSG (236 aa). The bZIP domain occupies 113-176; the sequence is EVKRRIRRER…EKLEFILAAH (64 aa). The segment at 115–135 is basic motif; that stretch reads KRRIRRERNKMAAAKCRNRRR. The interval 141 to 169 is leucine-zipper; that stretch reads LQAETDQLEDEKSALQTEIANLLKEKEKL. The tract at residues 237–244 is transforming protein v-Fox; sequence FISMAGWQ.

The protein belongs to the bZIP family. Fos subfamily.

The protein resides in the host nucleus. This Mus musculus (Mouse) protein is Transforming protein v-Fos/v-Fox (FOS-FOX).